We begin with the raw amino-acid sequence, 1026 residues long: Retinoblastoma-related protein 1 (1026 aa).

Positions 416 to 616 are domain A; the sequence is TPVSTAMTTA…EKGSSMYNSL (201 aa). A pocket region spans residues 416-872; that stretch reads TPVSTAMTTA…NEVFIPSVKP (457 aa). The spacer stretch occupies residues 617–737; the sequence is AVARPALSVE…PGGGGETCAE (121 aa). The interval 656-680 is disordered; the sequence is PVPSLPKPEPMSAQNGDPRSPKRPC. A domain B region spans residues 738-872; sequence TGISVFFSKI…NEVFIPSVKP (135 aa). The disordered stretch occupies residues 1007-1026; sequence QNGSSASSSGAPLKSEQPDS.

Belongs to the retinoblastoma protein (RB) family.

It is found in the nucleus. In terms of biological role, regulator of biological processes that recruits a histone deacetylase to control gene transcription. May play a role in the entry into mitosis, negatively regulating the cell proliferation. Formation of stable complexes with geminiviridae replication-associated proteins may create a cellular environment which favors viral DNA replication. The sequence is that of Retinoblastoma-related protein 1 (RBR1) from Pisum sativum (Garden pea).